We begin with the raw amino-acid sequence, 365 residues long: Cytoplasmic tRNA 2-thiolation protein 1 (365 aa).

The protein belongs to the TtcA family. CTU1/NCS6/ATPBD3 subfamily.

Its subcellular location is the cytoplasm. Its pathway is tRNA modification; 5-methoxycarbonylmethyl-2-thiouridine-tRNA biosynthesis. Functionally, plays a central role in 2-thiolation of mcm(5)S(2)U at tRNA wobble positions of tRNA(Lys), tRNA(Glu) and tRNA(Gln). Directly binds tRNAs and probably acts by catalyzing adenylation of tRNAs, an intermediate required for 2-thiolation. It is unclear whether it acts as a sulfurtransferase that transfers sulfur from thiocarboxylated URM1 onto the uridine of tRNAs at wobble position. Prior mcm(5) tRNA modification by the elongator complex is required for 2-thiolation. May also be involved in protein urmylation. This Yarrowia lipolytica (strain CLIB 122 / E 150) (Yeast) protein is Cytoplasmic tRNA 2-thiolation protein 1.